The chain runs to 143 residues: Putative transcriptional regulatory protein PH0763 (143 aa).

The protein belongs to the Tfx family.

In terms of biological role, putative transcriptional regulator. This Pyrococcus horikoshii (strain ATCC 700860 / DSM 12428 / JCM 9974 / NBRC 100139 / OT-3) protein is Putative transcriptional regulatory protein PH0763.